A 91-amino-acid polypeptide reads, in one-letter code: Probable Fe(2+)-trafficking protein (91 aa).

The protein belongs to the Fe(2+)-trafficking protein family.

In terms of biological role, could be a mediator in iron transactions between iron acquisition and iron-requiring processes, such as synthesis and/or repair of Fe-S clusters in biosynthetic enzymes. The protein is Probable Fe(2+)-trafficking protein of Xanthomonas axonopodis pv. citri (strain 306).